The following is a 301-amino-acid chain: Polyamine aminopropyltransferase (301 aa).

In terms of domain architecture, PABS spans 4 to 240 (WHWLLEWQTP…GLWGFVYGGV (237 aa)). Gln-33 is a binding site for S-methyl-5'-thioadenosine. Spermidine contacts are provided by His-64 and Glu-89. S-methyl-5'-thioadenosine is bound by residues Asp-109 and 141 to 142 (DG). Catalysis depends on Asp-159, which acts as the Proton acceptor.

The protein belongs to the spermidine/spermine synthase family. As to quaternary structure, homodimer or homotetramer.

The protein localises to the cytoplasm. The enzyme catalyses S-adenosyl 3-(methylsulfanyl)propylamine + putrescine = S-methyl-5'-thioadenosine + spermidine + H(+). The protein operates within amine and polyamine biosynthesis; spermidine biosynthesis; spermidine from putrescine: step 1/1. Functionally, catalyzes the irreversible transfer of a propylamine group from the amino donor S-adenosylmethioninamine (decarboxy-AdoMet) to putrescine (1,4-diaminobutane) to yield spermidine. In Saccharolobus islandicus (strain L.S.2.15 / Lassen #1) (Sulfolobus islandicus), this protein is Polyamine aminopropyltransferase.